The sequence spans 313 residues: Pseudouridine-5'-phosphate glycosidase (313 aa).

Catalysis depends on Glu-34, which acts as the Proton donor. Substrate is bound by residues Lys-95 and Val-115. Residue Asp-147 participates in Mn(2+) binding. 149–151 (SAD) is a substrate binding site. Residue Lys-168 is the Nucleophile of the active site.

Belongs to the pseudouridine-5'-phosphate glycosidase family. Homotrimer. Mn(2+) serves as cofactor.

The catalysed reaction is D-ribose 5-phosphate + uracil = psi-UMP + H2O. Its function is as follows. Catalyzes the reversible cleavage of pseudouridine 5'-phosphate (PsiMP) to ribose 5-phosphate and uracil. Functions biologically in the cleavage direction, as part of a pseudouridine degradation pathway. This is Pseudouridine-5'-phosphate glycosidase from Deinococcus radiodurans (strain ATCC 13939 / DSM 20539 / JCM 16871 / CCUG 27074 / LMG 4051 / NBRC 15346 / NCIMB 9279 / VKM B-1422 / R1).